The following is a 242-amino-acid chain: 3-deoxy-manno-octulosonate cytidylyltransferase (242 aa).

Belongs to the KdsB family.

Its subcellular location is the cytoplasm. It catalyses the reaction 3-deoxy-alpha-D-manno-oct-2-ulosonate + CTP = CMP-3-deoxy-beta-D-manno-octulosonate + diphosphate. Its pathway is nucleotide-sugar biosynthesis; CMP-3-deoxy-D-manno-octulosonate biosynthesis; CMP-3-deoxy-D-manno-octulosonate from 3-deoxy-D-manno-octulosonate and CTP: step 1/1. The protein operates within bacterial outer membrane biogenesis; lipopolysaccharide biosynthesis. Its function is as follows. Activates KDO (a required 8-carbon sugar) for incorporation into bacterial lipopolysaccharide in Gram-negative bacteria. This chain is 3-deoxy-manno-octulosonate cytidylyltransferase, found in Anaeromyxobacter dehalogenans (strain 2CP-C).